The following is a 345-amino-acid chain: Opioid-binding protein/cell adhesion molecule (345 aa).

An N-terminal signal peptide occupies residues 1–27 (MGVCGSLFQPWKCLVVVSLRLLFLVPT). Ig-like C2-type domains follow at residues 39 to 126 (PKAM…PKTS), 136 to 219 (PQIM…VKIT), and 223 to 310 (PPYI…ASIT). 3 N-linked (GlcNAc...) asparagine glycosylation sites follow: N44, N70, and N140. A disulfide bridge connects residues C57 and C115. 2 cysteine pairs are disulfide-bonded: C157–C202 and C244–C296. 3 N-linked (GlcNAc...) asparagine glycosylation sites follow: N285, N293, and N306. The GPI-anchor amidated asparagine moiety is linked to residue N322. Residues 323 to 345 (SASRALACLWLSGTLFAHFFIKF) constitute a propeptide, removed in mature form.

The protein belongs to the immunoglobulin superfamily. IgLON family.

The protein resides in the cell membrane. In terms of biological role, binds opioids in the presence of acidic lipids; probably involved in cell contact. The chain is Opioid-binding protein/cell adhesion molecule (OPCML) from Bos taurus (Bovine).